Reading from the N-terminus, the 398-residue chain is ATP-dependent RNA helicase eIF4A (398 aa).

The short motif at 25-53 (DSFDSMELKPELLRGVYAYGFERPSAIQQ) is the Q motif element. The Helicase ATP-binding domain occupies 56–226 (ILPIVKGNDV…TKFMRDPVRI (171 aa)). 69 to 76 (AQSGTGKT) is a binding site for ATP. Positions 174–177 (DEAD) match the DEAD box motif. The Helicase C-terminal domain maps to 237-398 (GIKQFYIAVE…EMPMNVADLI (162 aa)).

This sequence belongs to the DEAD box helicase family. eIF4A subfamily. In terms of assembly, component of the eIF4F complex, which composition varies with external and internal environmental conditions. It is composed of at least eIF4A, eIF4E and eIF4G.

It localises to the cytoplasm. The enzyme catalyses ATP + H2O = ADP + phosphate + H(+). ATP-dependent RNA helicase which is a subunit of the eIF4F complex involved in cap recognition and is required for mRNA binding to ribosome. In the current model of translation initiation, eIF4A unwinds RNA secondary structures in the 5'-UTR of mRNAs which is necessary to allow efficient binding of the small ribosomal subunit, and subsequent scanning for the initiator codon. This chain is ATP-dependent RNA helicase eIF4A (tif1), found in Emericella nidulans (strain FGSC A4 / ATCC 38163 / CBS 112.46 / NRRL 194 / M139) (Aspergillus nidulans).